The chain runs to 514 residues: Multifunctional alkaline phosphatase superfamily protein PehA (514 aa).

Aspartate 12, cysteine 57, aspartate 324, and histidine 325 together coordinate Mn(2+). Residue cysteine 57 is the Nucleophile of the active site. Cysteine 57 carries the 3-oxoalanine (Cys) modification.

It belongs to the alkaline phosphatase superfamily. As to quaternary structure, homotetramer. Mn(2+) serves as cofactor. Post-translationally, the conversion to 3-oxoalanine (also known as C-formylglycine, FGly), of a serine or cysteine residue in prokaryotes and of a cysteine residue in eukaryotes, is critical for catalytic activity. Phosphate triester hydrolytic activity is retained with unmodified cysteine acting as a nucleophile.

With respect to regulation, anions including Cl(-) and CH3COO(-), and SO4(2-) salts stimulate activity 20-40% at 100 mM. In terms of biological role, hydrolytic enzyme with a broad substrate specificity acting on phosphate diesters and phosphonate monoesters. Hydrolyzes phosphate mono- and triesters, sulfate monoesters and sulfonate monoesters. Hydrolyzes glyphosate monoesters. Does not hydrolyze DNA or cGMP. Hydrolyzes glyceryl glyphosate, but this substrate has a much lower affinity than the glyphosate monoesters. This Trinickia caryophylli (Paraburkholderia caryophylli) protein is Multifunctional alkaline phosphatase superfamily protein PehA.